We begin with the raw amino-acid sequence, 212 residues long: MKKILITGFEPFGNDKINPALEAVKLIAGRKLNGGEIVICQVPVVRYKSIETVKQAIEEQQPYAVITVGQASGRAAITPERIAINVDDFRIPDNEGIQVIDEPVVAGGPDAYFTTLPIKAMVSEIQAQGIPATVSNTAGTFVCNHLFYGIQHYLKDTNVRHGFVHIPLLPEQSVDGSQPTMKLEQIAEGLAIAAQAIIDNDSDIQQGAGTIC.

Active-site residues include Glu80, Cys143, and His165.

The protein belongs to the peptidase C15 family. Homotetramer.

The protein resides in the cytoplasm. The catalysed reaction is Release of an N-terminal pyroglutamyl group from a polypeptide, the second amino acid generally not being Pro.. Removes 5-oxoproline from various penultimate amino acid residues except L-proline. This Aliivibrio fischeri (strain MJ11) (Vibrio fischeri) protein is Pyrrolidone-carboxylate peptidase.